A 729-amino-acid chain; its full sequence is Triadin (729 aa).

The segment at Met-1–Pro-28 is disordered. The Cytoplasmic portion of the chain corresponds to Met-1–Pro-47. Residues Gly-8 to Val-24 are compositionally biased toward polar residues. Residues Ala-48–Phe-68 traverse the membrane as a helical segment. At Asp-69–Gln-729 the chain is on the lumenal side. Asn-75 carries an N-linked (GlcNAc...) asparagine glycan. Over residues Glu-117–Asp-129 the composition is skewed to acidic residues. Disordered regions lie at residues Glu-117–Asp-265, Asp-281–Gln-682, and Pro-705–Gln-729. Basic and acidic residues-rich tracts occupy residues Lys-130–Asp-265, Leu-309–Glu-357, Ala-371–Ile-433, Gly-444–Pro-509, Gly-516–Lys-531, Val-538–Leu-562, Lys-580–Lys-598, and Glu-609–Thr-674. Residue Asn-647 is glycosylated (N-linked (GlcNAc...) asparagine). Residues Ser-715–Gln-729 are compositionally biased toward polar residues.

Homooligomer of variable subunit number; disulfide-linked. Interacts with CASQ1 and RYR1 in skeletal muscle. Interacts with CASQ2. Phosphorylated by CaMK2. Post-translationally, N-glycosylated.

The protein resides in the cell membrane. It localises to the sarcoplasmic reticulum membrane. Contributes to the regulation of lumenal Ca2+ release via the sarcoplasmic reticulum calcium release channels RYR1 and RYR2, a key step in triggering skeletal and heart muscle contraction. Required for normal organization of the triad junction, where T-tubules and the sarcoplasmic reticulum terminal cisternae are in close contact. Required for normal skeletal muscle strength. Plays a role in excitation-contraction coupling in the heart and in regulating the rate of heart beats. The sequence is that of Triadin (TRDN) from Homo sapiens (Human).